The chain runs to 398 residues: MAANRRLFTSESVTEGHPDKMSDQISDAILDEILKKDPNARVACETTVTTGLVLVSGEISTSTYVDIPALVRETVKEIGYTRAKYGFDFETCAVLTAIDEQSADIAGGVNQALEARQGKMSEEEIDAIGAGDQGLMFGYACDETEELMPLPISLAHQLSKRLADVRKEGIVDYLRPDGKTQVTVEYDENDKPERIDTIVISTQHHSEIQNEQIERDMIEKVIQAVVPSELLDDKTKYFINPTGRFVIGGPQGDVGLTGRKIIVDTYGGYARHGGGAFSGKDATKVDRSAAYAARYVAKNIVAAGLAKSCEVQLAYAIGVAQPVSIAVNTFGTGKVSEDRLVEAVRELFDLRPAGIIRMLDLRKPIYKNTAAYGHFGRKDILFPWEKTDKTEELIALTK.

The interval M1–M21 is disordered. H17 contributes to the ATP binding site. Mg(2+) is bound at residue D19. Position 45 (E45) interacts with K(+). Positions 58 and 101 each coordinate L-methionine. The tract at residues Q101–Q111 is flexible loop. ATP contacts are provided by residues D177–K179, R244–F245, D253, R259–K260, A276, and K280. D253 lines the L-methionine pocket. K284 is a binding site for L-methionine.

Belongs to the AdoMet synthase family. As to quaternary structure, homotetramer; dimer of dimers. Mg(2+) is required as a cofactor. It depends on K(+) as a cofactor.

It is found in the cytoplasm. It carries out the reaction L-methionine + ATP + H2O = S-adenosyl-L-methionine + phosphate + diphosphate. It participates in amino-acid biosynthesis; S-adenosyl-L-methionine biosynthesis; S-adenosyl-L-methionine from L-methionine: step 1/1. In terms of biological role, catalyzes the formation of S-adenosylmethionine (AdoMet) from methionine and ATP. The overall synthetic reaction is composed of two sequential steps, AdoMet formation and the subsequent tripolyphosphate hydrolysis which occurs prior to release of AdoMet from the enzyme. This chain is S-adenosylmethionine synthase, found in Oceanobacillus iheyensis (strain DSM 14371 / CIP 107618 / JCM 11309 / KCTC 3954 / HTE831).